Reading from the N-terminus, the 397-residue chain is tRNA-specific 2-thiouridylase MnmA (397 aa).

Residues 6 to 13 (AMSGGVDS) and L32 contribute to the ATP site. The active-site Nucleophile is the C101. C101 and C199 are oxidised to a cystine. An ATP-binding site is contributed by G125. The tract at residues 148–150 (KDQ) is interaction with tRNA. C199 functions as the Cysteine persulfide intermediate in the catalytic mechanism.

The protein belongs to the MnmA/TRMU family.

Its subcellular location is the cytoplasm. The catalysed reaction is S-sulfanyl-L-cysteinyl-[protein] + uridine(34) in tRNA + AH2 + ATP = 2-thiouridine(34) in tRNA + L-cysteinyl-[protein] + A + AMP + diphosphate + H(+). Functionally, catalyzes the 2-thiolation of uridine at the wobble position (U34) of tRNA, leading to the formation of s(2)U34. This Clavibacter sepedonicus (Clavibacter michiganensis subsp. sepedonicus) protein is tRNA-specific 2-thiouridylase MnmA.